Consider the following 612-residue polypeptide: Dihydroxy-acid dehydratase (612 aa).

D81 contacts Mg(2+). C122 lines the [2Fe-2S] cluster pocket. The Mg(2+) site is built by D123 and K124. K124 carries the post-translational modification N6-carboxylysine. Residue C195 participates in [2Fe-2S] cluster binding. A Mg(2+)-binding site is contributed by E491. Residue S517 is the Proton acceptor of the active site.

The protein belongs to the IlvD/Edd family. As to quaternary structure, homodimer. The cofactor is [2Fe-2S] cluster. It depends on Mg(2+) as a cofactor.

The catalysed reaction is (2R)-2,3-dihydroxy-3-methylbutanoate = 3-methyl-2-oxobutanoate + H2O. It catalyses the reaction (2R,3R)-2,3-dihydroxy-3-methylpentanoate = (S)-3-methyl-2-oxopentanoate + H2O. The protein operates within amino-acid biosynthesis; L-isoleucine biosynthesis; L-isoleucine from 2-oxobutanoate: step 3/4. It functions in the pathway amino-acid biosynthesis; L-valine biosynthesis; L-valine from pyruvate: step 3/4. In terms of biological role, functions in the biosynthesis of branched-chain amino acids. Catalyzes the dehydration of (2R,3R)-2,3-dihydroxy-3-methylpentanoate (2,3-dihydroxy-3-methylvalerate) into 2-oxo-3-methylpentanoate (2-oxo-3-methylvalerate) and of (2R)-2,3-dihydroxy-3-methylbutanoate (2,3-dihydroxyisovalerate) into 2-oxo-3-methylbutanoate (2-oxoisovalerate), the penultimate precursor to L-isoleucine and L-valine, respectively. This Bartonella tribocorum (strain CIP 105476 / IBS 506) protein is Dihydroxy-acid dehydratase.